Reading from the N-terminus, the 446-residue chain is Deoxyguanosinetriphosphate triphosphohydrolase-like protein (446 aa).

The tract at residues 1-28 (MSSSVWQERRHGEDKQRRNDHRSPFQRD) is disordered. Over residues 7–28 (QERRHGEDKQRRNDHRSPFQRD) the composition is skewed to basic and acidic residues. The region spanning 59-252 (RLTHSLEVSQ…MELADDIAYA (194 aa)) is the HD domain.

The protein belongs to the dGTPase family. Type 2 subfamily.

In Shewanella sp. (strain ANA-3), this protein is Deoxyguanosinetriphosphate triphosphohydrolase-like protein.